Reading from the N-terminus, the 422-residue chain is 4-hydroxy-3-methylbut-2-en-1-yl diphosphate synthase (flavodoxin) (422 aa).

Cys316, Cys319, Cys362, and Glu369 together coordinate [4Fe-4S] cluster.

It belongs to the IspG family. Requires [4Fe-4S] cluster as cofactor.

The enzyme catalyses (2E)-4-hydroxy-3-methylbut-2-enyl diphosphate + oxidized [flavodoxin] + H2O + 2 H(+) = 2-C-methyl-D-erythritol 2,4-cyclic diphosphate + reduced [flavodoxin]. Its pathway is isoprenoid biosynthesis; isopentenyl diphosphate biosynthesis via DXP pathway; isopentenyl diphosphate from 1-deoxy-D-xylulose 5-phosphate: step 5/6. Functionally, converts 2C-methyl-D-erythritol 2,4-cyclodiphosphate (ME-2,4cPP) into 1-hydroxy-2-methyl-2-(E)-butenyl 4-diphosphate. The protein is 4-hydroxy-3-methylbut-2-en-1-yl diphosphate synthase (flavodoxin) of Ehrlichia canis (strain Jake).